The chain runs to 358 residues: Probable anti-sigma-M factor YhdL (358 aa).

Residues 74-96 (ISVLAVISTLMILPLCTLGSYLY) traverse the membrane as a helical segment.

The N-terminus of YhdL interacts with sigma-M. YhdL interacts specifically with YhdK.

The protein localises to the membrane. This is Probable anti-sigma-M factor YhdL (yhdL) from Bacillus subtilis (strain 168).